The primary structure comprises 32 residues: Apolipophorin-3 (32 aa).

Residues 1 to 32 (DAPSTTPPQDXEKKAAEFQKTFTEQXNQLANK) are disordered. A compositionally biased stretch (polar residues) spans 20–32 (KTFTEQXNQLANK).

The protein belongs to the insect apolipophorin-3 family. As to quaternary structure, equilibrium between a soluble monomer and a bound lipoprotein form. Apolipophorin-3 associates with lipophorin during lipid loading until each particle contains 9 or 14 molecules of apolipophorin-3. In terms of tissue distribution, hemolymph.

Its subcellular location is the secreted. Assists in the loading of diacylglycerol, generated from triacylglycerol stores in the fat body through the action of adipokinetic hormone, into lipophorin, the hemolymph lipoprotein. It increases the lipid carrying capacity of lipophorin by covering the expanding hydrophobic surface resulting from diacylglycerol uptake. It thus plays a critical role in the transport of lipids during flight in several species of insects. The polypeptide is Apolipophorin-3 (Diatraea grandiosella (Southwestern corn borer)).